A 142-amino-acid polypeptide reads, in one-letter code: Large ribosomal subunit protein uL13 (142 aa).

It belongs to the universal ribosomal protein uL13 family. In terms of assembly, part of the 50S ribosomal subunit.

Functionally, this protein is one of the early assembly proteins of the 50S ribosomal subunit, although it is not seen to bind rRNA by itself. It is important during the early stages of 50S assembly. The sequence is that of Large ribosomal subunit protein uL13 from Pseudomonas putida (strain W619).